A 223-amino-acid polypeptide reads, in one-letter code: UPF0441 protein YgiB (223 aa).

The segment covering 178–195 has biased composition (low complexity); it reads TVPKTAMAPKPATTTTVT. The disordered stretch occupies residues 178-223; the sequence is TVPKTAMAPKPATTTTVTRGGFGESVAKQSTMQRGATGTSSRSMGG. Residues 204–223 show a composition bias toward polar residues; the sequence is AKQSTMQRGATGTSSRSMGG.

The protein belongs to the UPF0441 family.

The polypeptide is UPF0441 protein YgiB (Escherichia coli O6:K15:H31 (strain 536 / UPEC)).